Here is a 500-residue protein sequence, read N- to C-terminus: Maturase K (500 aa).

Belongs to the intron maturase 2 family. MatK subfamily.

The protein resides in the plastid. It is found in the chloroplast. Functionally, usually encoded in the trnK tRNA gene intron. Probably assists in splicing its own and other chloroplast group II introns. The chain is Maturase K from Fragaria vesca (Woodland strawberry).